Reading from the N-terminus, the 239-residue chain is Venom nerve growth factor (239 aa).

The N-terminal stretch at 1-18 (MSMLCYTLIIAFLIGIWA) is a signal peptide. A propeptide spanning residues 19 to 125 (APKSEDNVPL…ALNRNIQAKR (107 aa)) is cleaved from the precursor. The segment covering 47–66 (GLKTSRNTDQRHPAPKKADD) has biased composition (basic and acidic residues). The tract at residues 47-68 (GLKTSRNTDQRHPAPKKADDQE) is disordered. Intrachain disulfides connect cysteine 139–cysteine 203, cysteine 181–cysteine 231, and cysteine 191–cysteine 233.

This sequence belongs to the NGF-beta family. In terms of assembly, homodimer; non-covalently linked. In terms of tissue distribution, expressed by the venom gland.

Its subcellular location is the secreted. Functionally, nerve growth factor is important for the development and maintenance of the sympathetic and sensory nervous systems. It stimulates division and differentiation of sympathetic and embryonic sensory neurons as well as basal forebrain cholinergic neurons in the brain. Its relevance in the snake venom is not clear. However, it has been shown to inhibit metalloproteinase-dependent proteolysis of platelet glycoprotein Ib alpha, suggesting a metalloproteinase inhibition to prevent metalloprotease autodigestion and/or protection against prey proteases. Binds a lipid between the two protein chains in the homodimer. The lipid-bound form promotes histamine relase from mouse mast cells, contrary to the lipid-free form. In Pseudechis porphyriacus (Red-bellied black snake), this protein is Venom nerve growth factor.